The following is an 800-amino-acid chain: Heterogeneous nuclear ribonucleoprotein U (800 aa).

Position 2 is an N-acetylserine (serine 2). Phosphoserine is present on serine 4. The SAP domain occupies valine 8 to leucine 42. N6-acetyllysine occurs at positions 17 and 21. A disordered region spans residues alanine 41–glutamate 257. Serine 58 carries the post-translational modification Phosphoserine. 2 stretches are compositionally biased toward low complexity: residues alanine 71–glycine 80 and glutamate 103–glycine 113. Composition is skewed to acidic residues over residues alanine 114–aspartate 128 and glutamate 134–glycine 147. A compositionally biased stretch (low complexity) spans glycine 153–glycine 173. Residue lysine 181 is modified to N6-acetyllysine. An ADP-ribosylserine modification is found at serine 182. Low complexity predominate over residues alanine 194–alanine 205. The segment covering glycine 209–tyrosine 242 has biased composition (basic and acidic residues). Residue arginine 231 is modified to Citrulline. An N6-acetyllysine; alternate modification is found at lysine 241. Residue lysine 241 forms a Glycyl lysine isopeptide (Lys-Gly) (interchain with G-Cter in SUMO1); alternate linkage. A Glycyl lysine isopeptide (Lys-Gly) (interchain with G-Cter in SUMO2); alternate cross-link involves residue lysine 241. Tyrosine 242 carries the post-translational modification Phosphotyrosine. Phosphoserine is present on residues serine 243 and serine 247. A B30.2/SPRY domain is found at arginine 244–lysine 440. Threonine 262 carries the post-translational modification Phosphothreonine. At lysine 328 the chain carries N6-acetyllysine. Residues proline 464–glutamate 648 are ATPase domain. Lysine 471 is covalently cross-linked (Glycyl lysine isopeptide (Lys-Gly) (interchain with G-Cter in SUMO2)). Position 480–487 (glycine 480–threonine 487) interacts with ATP. 2 positions are modified to N6-acetyllysine; alternate: lysine 492 and lysine 500. Residues lysine 492 and lysine 500 each participate in a glycyl lysine isopeptide (Lys-Gly) (interchain with G-Cter in SUMO2); alternate cross-link. Threonine 508 carries the phosphothreonine modification. Lysine 512 is covalently cross-linked (Glycyl lysine isopeptide (Lys-Gly) (interchain with G-Cter in SUMO2)). Residue lysine 527 is modified to N6-acetyllysine. Lysine 541 carries the post-translational modification N6-acetyllysine; alternate. A Glycyl lysine isopeptide (Lys-Gly) (interchain with G-Cter in SUMO2); alternate cross-link involves residue lysine 541. Residue lysine 550 forms a Glycyl lysine isopeptide (Lys-Gly) (interchain with G-Cter in SUMO2) linkage. Position 558 is a phosphothreonine (threonine 558). Residues lysine 585 and lysine 602 each participate in a glycyl lysine isopeptide (Lys-Gly) (interchain with G-Cter in SUMO2) cross-link. Positions glutamate 587–lysine 602 are actin-binding. Residue lysine 611 is modified to N6-acetyllysine; alternate. Lysine 611 participates in a covalent cross-link: Glycyl lysine isopeptide (Lys-Gly) (interchain with G-Cter in SUMO2); alternate. A coiled-coil region spans residues aspartate 626 to leucine 653. Residues lysine 640 and lysine 646 each participate in a glycyl lysine isopeptide (Lys-Gly) (interchain with G-Cter in SUMO2) cross-link. A compositionally biased stretch (basic and acidic residues) spans glutamate 647–glutamine 659. The segment at glutamate 647 to proline 729 is disordered. The residue at position 678 (arginine 678) is an Omega-N-methylarginine. Positions glycine 686 to glycine 704 are enriched in gly residues. The RNA-binding RGG-box stretch occupies residues methionine 690–arginine 715. 3 positions are modified to asymmetric dimethylarginine: arginine 691, arginine 696, and arginine 703. Residues arginine 709 and arginine 715 each carry the asymmetric dimethylarginine; alternate modification. An omega-N-methylarginine; alternate mark is found at arginine 709 and arginine 715. Positions arginine 715–glycine 725 are enriched in gly residues. Arginine 730 and arginine 737 each carry asymmetric dimethylarginine. Residues asparagine 745–serine 774 form a disordered region. Lysine 789 carries the N6-acetyllysine; alternate modification. A Glycyl lysine isopeptide (Lys-Gly) (interchain with G-Cter in SUMO2); alternate cross-link involves residue lysine 789.

Oligomer (via ATPase domain and RNA-binding RGG-box region); oligomerization occurs upon ATP-binding in a chromatin-associated RNAs (caRNAs)- and transcription-dependent manner and is required for chromatin decompaction. ATP hydrolysis is required to cycle from an oligomeric to monomeric state to compact chromatin. Component of the coding region determinant (CRD)-mediated complex, composed of DHX9, HNRNPU, IGF2BP1, SYNCRIP and YBX1. Identified in the spliceosome C complex. Identified in a IGF2BP1-dependent mRNP granule complex containing untranslated mRNAs. Associates with heterogeneous nuclear ribonucleoprotein (hnRNP) particles. Associates (via middle region) with the C-terminal domain (CTD) RNA polymerase II (Pol II) holoenzyme; this association occurs in a RNA-independent manner. Associates (via middle region) with the core-TFIIH basal transcription factor complex; this association inhibits the CTD phosphorylation of RNA polymerase II holoenzyme by down-regulating TFIIH kinase activity. Associates with the telomerase holoenzyme complex. Associates with spindle microtubules (MTs) in a TPX2-dependent manner. Interacts (via C-terminus) with actin; this interaction is direct and mediates association with the phosphorylated CTD of RNA polymerase II and is disrupted in presence of the long non-coding H19 RNA. Interacts with AURKA. Interacts (via C-terminus) with CBX5; this interaction is, at least in part, RNA-dependent. Interacts with CR2. Interacts with CRY1. Interacts (via C-terminus) with EP300; this interaction enhances DNA-binding to nuclear scaffold/matrix attachment region (S/MAR) elements. Interacts with ERBB4. Interacts with GEMIN5. Interacts with IGF2BP1. Interacts with IGF2BP2 and IGF2BP3. Interacts with NCL; this interaction occurs during mitosis. Interacts (via C-terminus) with NR3C1 (via C-terminus). Interacts with PLK1; this interaction induces phosphorylation of HNRNPU at Ser-58 in mitosis. Interacts with POU3F4. Interacts with SMARCA4; this interaction occurs in embryonic stem cells and stimulates global Pol II-mediated transcription. Interacts (via C-terminus) with TOP2A; this interaction protects the topoisomerase TOP2A from degradation and positively regulates the relaxation of supercoiled DNA by TOP2A in a RNA-dependent manner. Interacts with TPX2; this interaction recruits HNRNPU to spindle microtubules (MTs). Interacts with UBQLN2. Interacts (via RNA-binding RGG-box region) with ZBTB7B; the interaction facilitates the recruitment of long non-coding RNA Blnc1 by ZBTB7B. Interacts with ERCC6. In terms of processing, cleaved at Asp-94 by CASP3 during T-cell apoptosis, resulting in a loss of DNA- and chromatin-binding activities. Extensively phosphorylated. Phosphorylated on Ser-58 by PLK1 and dephosphorylated by protein phosphatase 2A (PP2A) in mitosis. Post-translationally, arg-709 and Arg-715 are dimethylated, probably to asymmetric dimethylarginine. In terms of processing, citrullinated by PADI4.

The protein resides in the nucleus. It is found in the nucleus matrix. It localises to the chromosome. Its subcellular location is the nucleus speckle. The protein localises to the cytoplasm. The protein resides in the cytoskeleton. It is found in the microtubule organizing center. It localises to the centrosome. Its subcellular location is the centromere. The protein localises to the kinetochore. The protein resides in the spindle. It is found in the spindle pole. It localises to the midbody. Its subcellular location is the cell surface. The protein localises to the cytoplasmic granule. In terms of biological role, DNA- and RNA-binding protein involved in several cellular processes such as nuclear chromatin organization, telomere-length regulation, transcription, mRNA alternative splicing and stability, Xist-mediated transcriptional silencing and mitotic cell progression. Plays a role in the regulation of interphase large-scale gene-rich chromatin organization through chromatin-associated RNAs (caRNAs) in a transcription-dependent manner, and thereby maintains genomic stability. Required for the localization of the long non-coding Xist RNA on the inactive chromosome X (Xi) and the subsequent initiation and maintenance of X-linked transcriptional gene silencing during X-inactivation. Plays a role as a RNA polymerase II (Pol II) holoenzyme transcription regulator. Promotes transcription initiation by direct association with the core-TFIIH basal transcription factor complex for the assembly of a functional pre-initiation complex with Pol II in a actin-dependent manner. Blocks Pol II transcription elongation activity by inhibiting the C-terminal domain (CTD) phosphorylation of Pol II and dissociates from Pol II pre-initiation complex prior to productive transcription elongation. Positively regulates CBX5-induced transcriptional gene silencing and retention of CBX5 in the nucleus. Negatively regulates glucocorticoid-mediated transcriptional activation. Key regulator of transcription initiation and elongation in embryonic stem cells upon leukemia inhibitory factor (LIF) signaling. Involved in the long non-coding RNA H19-mediated Pol II transcriptional repression. Participates in the circadian regulation of the core clock component BMAL1 transcription. Plays a role in the regulation of telomere length. Plays a role as a global pre-mRNA alternative splicing modulator by regulating U2 small nuclear ribonucleoprotein (snRNP) biogenesis. Plays a role in mRNA stability. Component of the CRD-mediated complex that promotes MYC mRNA stabilization. Enhances the expression of specific genes, such as tumor necrosis factor TNFA, by regulating mRNA stability, possibly through binding to the 3'-untranslated region (UTR). Plays a role in mitotic cell cycle regulation. Involved in the formation of stable mitotic spindle microtubules (MTs) attachment to kinetochore, spindle organization and chromosome congression. Phosphorylation at Ser-58 by PLK1 is required for chromosome alignement and segregation and progression through mitosis. Also contributes to the targeting of AURKA to mitotic spindle MTs. Binds to double- and single-stranded DNA and RNA, poly(A), poly(C) and poly(G) oligoribonucleotides. Binds to chromatin-associated RNAs (caRNAs). Associates with chromatin to scaffold/matrix attachment region (S/MAR) elements in a chromatin-associated RNAs (caRNAs)-dependent manner. Binds (via RNA-binding RGG-box region) to the long non-coding Xist RNA; this binding is direct and bridges the Xist RNA and the inactive chromosome X (Xi). Binds the long non-coding H19 RNA. Binds to SMN1/2 pre-mRNAs at G/U-rich regions. Binds to small nuclear RNAs (snRNAs). Binds to the 3'-UTR of TNFA mRNA. Also negatively regulates embryonic stem cell differentiation upon LIF signaling. Required for embryonic development. Binds to brown fat long non-coding RNA 1 (Blnc1); facilitates the recruitment of Blnc1 by ZBTB7B required to drive brown and beige fat development and thermogenesis. This is Heterogeneous nuclear ribonucleoprotein U from Mus musculus (Mouse).